The primary structure comprises 220 residues: ATP synthase subunit beta, chloroplastic (220 aa).

Belongs to the ATPase alpha/beta chains family. In terms of assembly, F-type ATPases have 2 components, CF(1) - the catalytic core - and CF(0) - the membrane proton channel. CF(1) has five subunits: alpha(3), beta(3), gamma(1), delta(1), epsilon(1). CF(0) has four main subunits: a(1), b(1), b'(1) and c(9-12).

It localises to the plastid. The protein resides in the chloroplast thylakoid membrane. It catalyses the reaction ATP + H2O + 4 H(+)(in) = ADP + phosphate + 5 H(+)(out). Produces ATP from ADP in the presence of a proton gradient across the membrane. The catalytic sites are hosted primarily by the beta subunits. This Osmundastrum cinnamomeum (Cinnamon fern) protein is ATP synthase subunit beta, chloroplastic (atpB).